The sequence spans 285 residues: Polyamine aminopropyltransferase (285 aa).

In terms of domain architecture, PABS spans 5–241 (DNWYIEHFQP…GWWSVTMASK (237 aa)). Glutamine 35 is an S-methyl-5'-thioadenosine binding site. Spermidine is bound by residues histidine 66 and aspartate 90. S-methyl-5'-thioadenosine is bound by residues aspartate 110 and 141–142 (DG). The Proton acceptor role is filled by aspartate 160. 160-163 (DSTD) lines the spermidine pocket. Proline 167 provides a ligand contact to S-methyl-5'-thioadenosine.

It belongs to the spermidine/spermine synthase family. As to quaternary structure, homodimer or homotetramer.

It localises to the cytoplasm. It carries out the reaction S-adenosyl 3-(methylsulfanyl)propylamine + putrescine = S-methyl-5'-thioadenosine + spermidine + H(+). Its pathway is amine and polyamine biosynthesis; spermidine biosynthesis; spermidine from putrescine: step 1/1. Catalyzes the irreversible transfer of a propylamine group from the amino donor S-adenosylmethioninamine (decarboxy-AdoMet) to putrescine (1,4-diaminobutane) to yield spermidine. This chain is Polyamine aminopropyltransferase, found in Xanthomonas oryzae pv. oryzae (strain MAFF 311018).